We begin with the raw amino-acid sequence, 410 residues long: Multifunctional CCA protein (410 aa).

ATP is bound by residues Gly-8 and Arg-11. CTP contacts are provided by Gly-8 and Arg-11. Mg(2+) contacts are provided by Asp-21 and Asp-23. 3 residues coordinate ATP: Arg-91, Arg-138, and Arg-141. Arg-91, Arg-138, and Arg-141 together coordinate CTP. Positions 229-347 (TGIHQEMVSD…AQLALVCEAD (119 aa)) constitute an HD domain.

The protein belongs to the tRNA nucleotidyltransferase/poly(A) polymerase family. Bacterial CCA-adding enzyme type 1 subfamily. In terms of assembly, monomer. Can also form homodimers and oligomers. It depends on Mg(2+) as a cofactor. Ni(2+) is required as a cofactor.

It carries out the reaction a tRNA precursor + 2 CTP + ATP = a tRNA with a 3' CCA end + 3 diphosphate. The catalysed reaction is a tRNA with a 3' CCA end + 2 CTP + ATP = a tRNA with a 3' CCACCA end + 3 diphosphate. In terms of biological role, catalyzes the addition and repair of the essential 3'-terminal CCA sequence in tRNAs without using a nucleic acid template. Adds these three nucleotides in the order of C, C, and A to the tRNA nucleotide-73, using CTP and ATP as substrates and producing inorganic pyrophosphate. tRNA 3'-terminal CCA addition is required both for tRNA processing and repair. Also involved in tRNA surveillance by mediating tandem CCA addition to generate a CCACCA at the 3' terminus of unstable tRNAs. While stable tRNAs receive only 3'-terminal CCA, unstable tRNAs are marked with CCACCA and rapidly degraded. The polypeptide is Multifunctional CCA protein (Xanthomonas oryzae pv. oryzae (strain MAFF 311018)).